We begin with the raw amino-acid sequence, 361 residues long: Polyribonucleotide 5'-hydroxyl-kinase PH0197 (361 aa).

43-50 (GDVDTGKT) serves as a coordination point for ATP.

A divalent metal cation is required as a cofactor.

The enzyme catalyses a 5'-end dephospho-2'-deoxyribonucleoside-DNA + ATP = a 5'-end 5'-phospho-2'-deoxyribonucleoside-DNA + ADP + H(+). The catalysed reaction is a 5'-end dephospho-ribonucleoside-RNA + ATP = a 5'-end 5'-phospho-ribonucleoside-RNA + ADP + H(+). DNA kinase activity is inhibited by 250 mM sodium chloride whereas RNA kinase activity is unaffected. Functionally, polynucleotide kinase that can phosphorylate the 5'-hydroxyl groups of both single-stranded RNA (ssRNA) and single-stranded DNA (ssDNA). Exhibits a strong preference for ssRNA. This Pyrococcus horikoshii (strain ATCC 700860 / DSM 12428 / JCM 9974 / NBRC 100139 / OT-3) protein is Polyribonucleotide 5'-hydroxyl-kinase PH0197.